The primary structure comprises 685 residues: Allergen Cr-PI (685 aa).

The N-terminal stretch at 1 to 16 is a signal peptide; sequence MKTALVFAAVVAFVAA. N-linked (GlcNAc...) asparagine glycosylation is present at N233.

The protein belongs to the hemocyanin family.

The protein resides in the secreted. Its subcellular location is the extracellular space. Functionally, larval storage protein (LSP) which may serve as a store of amino acids for synthesis of adult proteins. In Periplaneta americana (American cockroach), this protein is Allergen Cr-PI.